Consider the following 241-residue polypeptide: MTSQLAGFKGTRGTLLVGIGGCSSSGKSTIAKLAVQVLEDAVLVHQDDFYRHDDEVPFDEEYQIGNWDVPEALDMAQFERELDHIRATGRPAAKLVHNGNIDDVGKFGISEEYLEELRRRYRGRISQPVVLVDGFMLYHDDKVAARFDCRLLVRAPYATMKARRASRGGYKTLDSFWQDPPFYFDKFVYKSYAATHARLFRNCDVEDRLVAPDVQEIYNGDEAQITCVLEQVLDAIAAAQC.

Position 21–29 (21–29) interacts with ATP; the sequence is GCSSSGKST. Positions 28 and 47 each coordinate Mg(2+). The active-site Proton acceptor is the D47. Residues 47-50, 67-68, and D68 contribute to the substrate site; these read DDFY and WD. Position 163 (R163) interacts with ATP. R164 serves as a coordination point for substrate. ATP contacts are provided by residues R167, 167–169, and 213–215; these read RGG and DVQ. Position 169–170 (169–170) interacts with substrate; the sequence is GY.

This sequence belongs to the uridine kinase family. NRK subfamily.

The enzyme catalyses beta-nicotinamide D-riboside + ATP = beta-nicotinamide D-ribonucleotide + ADP + H(+). The catalysed reaction is beta-D-ribosylnicotinate + ATP = nicotinate beta-D-ribonucleotide + ADP + H(+). The protein operates within cofactor biosynthesis; NAD(+) biosynthesis. Functionally, catalyzes the phosphorylation of nicotinamide riboside (NR) and nicotinic acid riboside (NaR) to form nicotinamide mononucleotide (NMN) and nicotinic acid mononucleotide (NaMN). The protein is Nicotinamide riboside kinase (NRK1) of Eremothecium gossypii (strain ATCC 10895 / CBS 109.51 / FGSC 9923 / NRRL Y-1056) (Yeast).